A 790-amino-acid chain; its full sequence is Cadherin-6 (790 aa).

Residues 1–18 (MRTYRYFLLLFWVGQPYP) form the signal peptide. Residues 19–53 (TLSTPLSKRTSGFPAKKRALELSGNSKNELNRSKR) constitute a propeptide that is removed on maturation. N49 carries N-linked (GlcNAc...) asparagine glycosylation. Cadherin domains are found at residues 54-159 (SWMW…EPIF), 160-268 (TKEV…PPRF), 269-383 (PQST…PPVF), 384-486 (SKLA…DNAP), and 487-608 (EFAE…LIHP). The Extracellular segment spans residues 54 to 615 (SWMWNQFFLL…IHPTGLSTGA (562 aa)). The N-linked (GlcNAc...) asparagine glycan is linked to N255. The interval 259 to 288 (TDVNDNPPRFPQSTYQFKTPESSPPGTPIG) is disordered. Residues 269-279 (PQSTYQFKTPE) show a composition bias toward polar residues. N-linked (GlcNAc...) asparagine glycans are attached at residues N399, N437, N455, and N536. A helical transmembrane segment spans residues 616–636 (LVAILLCIVILLVTVVLFAAL). Over 637-790 (RRQRKKEPLI…YGGVDSDKDS (154 aa)) the chain is Cytoplasmic. Phosphoserine is present on residues S786 and S790.

In terms of tissue distribution, highly expressed in brain, cerebellum, and kidney. Lung, pancreas, and gastric mucosa show a weak expression. Also expressed in certain liver and kidney carcinomas.

It is found in the cell membrane. Its function is as follows. Cadherins are calcium-dependent cell adhesion proteins. They preferentially interact with themselves in a homophilic manner in connecting cells; cadherins may thus contribute to the sorting of heterogeneous cell types. The sequence is that of Cadherin-6 (CDH6) from Homo sapiens (Human).